The sequence spans 567 residues: Putative laccase-17 (567 aa).

Residues 1–22 (MPSRGCSCWLLSLALLCSLAAA) form the signal peptide. Plastocyanin-like domains are found at residues 30–146 (VIRE…PRDG) and 158–310 (ELAP…YGAA). An N-linked (GlcNAc...) asparagine glycan is attached at N76. H80, H82, H125, and H127 together coordinate Cu cation. N-linked (GlcNAc...) asparagine glycosylation is found at N187, N241, N298, N312, N327, N365, N368, N378, N388, and N430. One can recognise a Plastocyanin-like 3 domain in the interval 415–551 (DFPANPPVQF…AMAFLVDDGV (137 aa)). 7 residues coordinate Cu cation: H468, H471, H473, H530, C531, H532, and H536.

It belongs to the multicopper oxidase family. Cu cation serves as cofactor.

The protein localises to the secreted. The protein resides in the extracellular space. It localises to the apoplast. It carries out the reaction 4 hydroquinone + O2 = 4 benzosemiquinone + 2 H2O. Lignin degradation and detoxification of lignin-derived products. In Oryza sativa subsp. japonica (Rice), this protein is Putative laccase-17 (LAC17).